A 557-amino-acid chain; its full sequence is T-complex protein 1 subunit eta (557 aa).

A2 carries the post-translational modification N-acetylalanine. Positions 529 to 557 are disordered; the sequence is PKSESAQGDAAGAMGRGRGGGRGRGMRRR. Positions 547-557 are enriched in basic residues; it reads GGGRGRGMRRR.

The protein belongs to the TCP-1 chaperonin family. In terms of assembly, heterooligomeric complex of about 850 to 900 kDa that forms two stacked rings, 12 to 16 nm in diameter. Interacts with KNAT1.

It is found in the cytoplasm. Its function is as follows. Molecular chaperone; assists the folding of proteins upon ATP hydrolysis. Known to play a role, in vitro, in the folding of actin and tubulin. This is T-complex protein 1 subunit eta from Arabidopsis thaliana (Mouse-ear cress).